The following is a 26-amino-acid chain: MPSQKSPTKRSPTKRSPQKGGKGAKR.

The interval 1-26 (MPSQKSPTKRSPTKRSPQKGGKGAKR) is disordered. Short sequence motifs (SPKK motif) lie at residues 6–9 (SPTK), 11–14 (SPTK), and 16–19 (SPQK). Positions 7–26 (PTKRSPTKRSPQKGGKGAKR) are enriched in basic residues. 2 positions are modified to phosphoserine: Ser-11 and Ser-16.

This sequence belongs to the histone H2B family. As to quaternary structure, the nucleosome is a histone octamer containing two molecules each of H2A, H2B, H3 and H4 assembled in one H3-H4 heterotetramer and two H2A-H2B heterodimers. The octamer wraps approximately 147 bp of DNA. In terms of processing, monoubiquitination gives a specific tag for epigenetic transcriptional activation and is also prerequisite for histone H3 'Lys-4' and 'Lys-79' methylation. Post-translationally, phosphorylated on SPKK motifs 2 and 3; which may regulate DNA binding. Dephosphorylated during maturation of spermatids to mature sperm and rephosphorylated at fertilization.

It is found in the nucleus. The protein resides in the chromosome. Functionally, core component of nucleosome. Nucleosomes wrap and compact DNA into chromatin, limiting DNA accessibility to the cellular machineries which require DNA as a template. Histones thereby play a central role in transcription regulation, DNA repair, DNA replication and chromosomal stability. DNA accessibility is regulated via a complex set of post-translational modifications of histones, also called histone code, and nucleosome remodeling. The chain is Histone H2B.1, sperm from Echinus esculentus (Sea urchin).